The chain runs to 1057 residues: Carbamoyl phosphate synthase large chain (1057 aa).

A carboxyphosphate synthetic domain region spans residues M1–E401. ATP is bound by residues R129, R169, G175, G176, K208, I210, E215, G241, I242, H243, Q284, and E298. The 195-residue stretch at R133–V327 folds into the ATP-grasp 1 domain. 3 residues coordinate Mg(2+): Q284, E298, and N300. Positions 284, 298, and 300 each coordinate Mn(2+). Residues Y402–S546 are oligomerization domain. The tract at residues I547–G929 is carbamoyl phosphate synthetic domain. In terms of domain architecture, ATP-grasp 2 spans E671 to I861. ATP-binding residues include R707, R746, L748, E752, G777, V778, H779, S780, Q820, and E832. Mg(2+)-binding residues include Q820, E832, and N834. Residues Q820, E832, and N834 each contribute to the Mn(2+) site. Residues V930–M1057 enclose the MGS-like domain. An allosteric domain region spans residues V930 to M1057.

The protein belongs to the CarB family. Composed of two chains; the small (or glutamine) chain promotes the hydrolysis of glutamine to ammonia, which is used by the large (or ammonia) chain to synthesize carbamoyl phosphate. Tetramer of heterodimers (alpha,beta)4. It depends on Mg(2+) as a cofactor. Requires Mn(2+) as cofactor.

It carries out the reaction hydrogencarbonate + L-glutamine + 2 ATP + H2O = carbamoyl phosphate + L-glutamate + 2 ADP + phosphate + 2 H(+). The enzyme catalyses hydrogencarbonate + NH4(+) + 2 ATP = carbamoyl phosphate + 2 ADP + phosphate + 2 H(+). It functions in the pathway amino-acid biosynthesis; L-arginine biosynthesis; carbamoyl phosphate from bicarbonate: step 1/1. The protein operates within pyrimidine metabolism; UMP biosynthesis via de novo pathway; (S)-dihydroorotate from bicarbonate: step 1/3. Large subunit of the glutamine-dependent carbamoyl phosphate synthetase (CPSase). CPSase catalyzes the formation of carbamoyl phosphate from the ammonia moiety of glutamine, carbonate, and phosphate donated by ATP, constituting the first step of 2 biosynthetic pathways, one leading to arginine and/or urea and the other to pyrimidine nucleotides. The large subunit (synthetase) binds the substrates ammonia (free or transferred from glutamine from the small subunit), hydrogencarbonate and ATP and carries out an ATP-coupled ligase reaction, activating hydrogencarbonate by forming carboxy phosphate which reacts with ammonia to form carbamoyl phosphate. This chain is Carbamoyl phosphate synthase large chain, found in Staphylococcus aureus (strain MRSA252).